A 304-amino-acid polypeptide reads, in one-letter code: MSTRTEAVKAYLLDLQDRICTALEQEDGNAHFVEDAWTRPAGGGGRTRVVENGAVIEKGGVNFSHVFGSNLPPSASAHRPELAGRGFEALGVSLVIHPHSPHVPTSHANVRFFIAEKEGEEPVWWFGGGFDLTPYYGVEEDCVHWHRVAERACAPFGDDVYPRYKAWCDSYFHLKHRDEPRGIGGLFFDDVNQWDFDTSFAFIRAIGDAFINAYLPIVRRRKAAAYTVQQREFQEFRRGRYVEFNLVYDRGTLFGLQSGGRTESILMSLPPQVRWGYDWKAAPGSEEARLTDYFLTDRDWLADN.

Residue S93 participates in substrate binding. A divalent metal cation is bound by residues H97 and H107. Catalysis depends on H107, which acts as the Proton donor. 109-111 (NVR) is a binding site for substrate. Residues H146 and H176 each contribute to the a divalent metal cation site. The interval 241 to 276 (YVEFNLVYDRGTLFGLQSGGRTESILMSLPPQVRWG) is important for dimerization. Position 259–261 (259–261 (GGR)) interacts with substrate.

It belongs to the aerobic coproporphyrinogen-III oxidase family. In terms of assembly, homodimer. It depends on a divalent metal cation as a cofactor.

It is found in the cytoplasm. It catalyses the reaction coproporphyrinogen III + O2 + 2 H(+) = protoporphyrinogen IX + 2 CO2 + 2 H2O. Its pathway is porphyrin-containing compound metabolism; protoporphyrin-IX biosynthesis; protoporphyrinogen-IX from coproporphyrinogen-III (O2 route): step 1/1. Its function is as follows. Involved in the heme biosynthesis. Catalyzes the aerobic oxidative decarboxylation of propionate groups of rings A and B of coproporphyrinogen-III to yield the vinyl groups in protoporphyrinogen-IX. In Pseudomonas syringae pv. tomato (strain ATCC BAA-871 / DC3000), this protein is Oxygen-dependent coproporphyrinogen-III oxidase.